The primary structure comprises 159 residues: Large ribosomal subunit protein uL15 (159 aa).

Positions 21 to 34 are enriched in basic residues; it reads LRPAPGAHKSKIRV. The segment at 21 to 55 is disordered; the sequence is LRPAPGAHKSKIRVGRGEGSKGKTAGRGTKGSKAR.

This sequence belongs to the universal ribosomal protein uL15 family. Part of the 50S ribosomal subunit.

Binds to the 23S rRNA. This chain is Large ribosomal subunit protein uL15, found in Frankia casuarinae (strain DSM 45818 / CECT 9043 / HFP020203 / CcI3).